Consider the following 245-residue polypeptide: Ubiquinone/menaquinone biosynthesis C-methyltransferase UbiE (245 aa).

S-adenosyl-L-methionine is bound by residues threonine 71, aspartate 92, and 118-119 (DA).

The protein belongs to the class I-like SAM-binding methyltransferase superfamily. MenG/UbiE family.

It carries out the reaction a 2-demethylmenaquinol + S-adenosyl-L-methionine = a menaquinol + S-adenosyl-L-homocysteine + H(+). It catalyses the reaction a 2-methoxy-6-(all-trans-polyprenyl)benzene-1,4-diol + S-adenosyl-L-methionine = a 5-methoxy-2-methyl-3-(all-trans-polyprenyl)benzene-1,4-diol + S-adenosyl-L-homocysteine + H(+). The protein operates within quinol/quinone metabolism; menaquinone biosynthesis; menaquinol from 1,4-dihydroxy-2-naphthoate: step 2/2. It participates in cofactor biosynthesis; ubiquinone biosynthesis. Methyltransferase required for the conversion of demethylmenaquinol (DMKH2) to menaquinol (MKH2) and the conversion of 2-polyprenyl-6-methoxy-1,4-benzoquinol (DDMQH2) to 2-polyprenyl-3-methyl-6-methoxy-1,4-benzoquinol (DMQH2). This chain is Ubiquinone/menaquinone biosynthesis C-methyltransferase UbiE, found in Neisseria meningitidis serogroup C (strain 053442).